The sequence spans 448 residues: C4-dicarboxylate transport protein (448 aa).

9 helical membrane-spanning segments follow: residues 13–33 (SLYA…HFYP), 49–69 (LIKM…IAGM), 81–101 (LALL…LLVV), 149–169 (AFAK…GFAL), 193–213 (IVGI…AFTI), 227–247 (LMGA…GIVS), 294–314 (VVGL…SIYL), 336–356 (TLLA…GSGF), and 357–377 (IVLA…LALI).

This sequence belongs to the dicarboxylate/amino acid:cation symporter (DAACS) (TC 2.A.23) family.

It localises to the cell inner membrane. In terms of biological role, responsible for the transport of dicarboxylates such as succinate, fumarate, and malate from the periplasm across the membrane. In Albidiferax ferrireducens (strain ATCC BAA-621 / DSM 15236 / T118) (Rhodoferax ferrireducens), this protein is C4-dicarboxylate transport protein.